Consider the following 480-residue polypeptide: Aromatic-L-amino-acid decarboxylase (480 aa).

An N-acetylmethionine modification is found at M1. Repeat copies occupy residues 58–115 (RDIE…TELE) and 118–178 (MMDW…TQAA). The tract at residues 58–178 (RDIEKIIMPG…AASPELTQAA (121 aa)) is 2 X approximate tandem repeats. Position 82 (T82) interacts with substrate. Positions 148 and 149 each coordinate pyridoxal 5'-phosphate. A substrate-binding site is contributed by H192. T246 and N300 together coordinate pyridoxal 5'-phosphate. K303 carries the N6-(pyridoxal phosphate)lysine modification.

Belongs to the group II decarboxylase family. Homodimer. The cofactor is pyridoxal 5'-phosphate.

It carries out the reaction L-dopa + H(+) = dopamine + CO2. It catalyses the reaction 5-hydroxy-L-tryptophan + H(+) = serotonin + CO2. It functions in the pathway catecholamine biosynthesis; dopamine biosynthesis; dopamine from L-tyrosine: step 2/2. Its function is as follows. Catalyzes the decarboxylation of L-3,4-dihydroxyphenylalanine (DOPA) to dopamine and L-5-hydroxytryptophan to serotonin. The polypeptide is Aromatic-L-amino-acid decarboxylase (Rattus norvegicus (Rat)).